Here is a 423-residue protein sequence, read N- to C-terminus: MEGLSPGQGNNTTSSEGPFGTRGNATGISDVTFSYQVITSLLLGTLIFCAVLGNACVVAAIALERSLQNVANYLIGSLAVTDLMVSVLVLPMAALYQVLNKWTLGQVTCDLFIALDVLCCTSSILHLCAIALDRYWAITDPIDYVNKRTPRRAAALISLTWLIGFLISIPPMLGWRTPEDRSDPDACTISKDHGYTIYSTFGAFYIPLLLMLVLYGRIFRAARFRIRKTVKKAERKGADARSGVSPAPQPRKSVNGEPGGREWRQGPGSKAGGPLCTNGAVRRGDDGAALEVIEVHRVGSSKEHLPLPSEAGAIPCAPASFEKKNERNAEAKRKMALARERKTVKTLGIIMGTFILCWLPFFIVALVLPFCESSCHMPTLLGAIINWLGYSNSLLNPVIYAYFNKDFQNAFKKIVRCKFCRRR.

The segment at 1 to 20 (MEGLSPGQGNNTTSSEGPFG) is disordered. Residues 1–38 (MEGLSPGQGNNTTSSEGPFGTRGNATGISDVTFSYQVI) are Extracellular-facing. The segment covering 7–16 (GQGNNTTSSE) has biased composition (polar residues). Asn10, Asn11, and Asn24 each carry an N-linked (GlcNAc...) asparagine glycan. The chain crosses the membrane as a helical span at residues 39–59 (TSLLLGTLIFCAVLGNACVVA). The Cytoplasmic portion of the chain corresponds to 60–73 (AIALERSLQNVANY). A helical transmembrane segment spans residues 74 to 98 (LIGSLAVTDLMVSVLVLPMAALYQV). The Extracellular segment spans residues 99 to 107 (LNKWTLGQV). A helical transmembrane segment spans residues 108 to 132 (TCDLFIALDVLCCTSSILHLCAIAL). A disulfide bridge connects residues Cys109 and Cys187. Asp116 and Cys120 together coordinate serotonin. The DRY motif; important for ligand-induced conformation changes signature appears at 133–135 (DRY). Residues 133-152 (DRYWAITDPIDYVNKRTPRR) are Cytoplasmic-facing. A helical transmembrane segment spans residues 153–174 (AAALISLTWLIGFLISIPPMLG). Residues 175–193 (WRTPEDRSDPDACTISKDH) lie on the Extracellular side of the membrane. Residues 194 to 216 (GYTIYSTFGAFYIPLLLMLVLYG) traverse the membrane as a helical segment. Over 217–346 (RIFRAARFRI…LARERKTVKT (130 aa)) the chain is Cytoplasmic. The disordered stretch occupies residues 235 to 277 (RKGADARSGVSPAPQPRKSVNGEPGGREWRQGPGSKAGGPLCT). 1D-myo-inositol 4-phosphate contacts are provided by Lys345, Thr346, and Gly352. A helical transmembrane segment spans residues 347–370 (LGIIMGTFILCWLPFFIVALVLPF). The Extracellular portion of the chain corresponds to 371-378 (CESSCHMP). A helical transmembrane segment spans residues 379–403 (TLLGAIINWLGYSNSLLNPVIYAYF). The NPxxY motif; important for ligand-induced conformation changes and signaling motif lies at 396–400 (NPVIY). Positions 403, 404, and 405 each coordinate 1D-myo-inositol 4-phosphate. Residues 404–423 (NKDFQNAFKKIVRCKFCRRR) are Cytoplasmic-facing.

It belongs to the G-protein coupled receptor 1 family. 5-hydroxytryptamine receptor subfamily. HTR1A sub-subfamily. Heterodimer; heterodimerizes with GPER1. Interacts with YIF1B. Interacts with GPR39 and GALR1.

It localises to the cell membrane. It is found in the cell projection. Its subcellular location is the dendrite. With respect to regulation, G-protein coupled receptor activity is regulated by lipids: phosphatidylinositol 4-phosphate increases HTR1A-mediated activity. Functionally, G-protein coupled receptor for 5-hydroxytryptamine (serotonin). Also functions as a receptor for various drugs and psychoactive substances. Ligand binding causes a conformation change that triggers signaling via guanine nucleotide-binding proteins (G proteins) and modulates the activity of downstream effectors, such as adenylate cyclase. HTR1A is coupled to G(i)/G(o) G alpha proteins and mediates inhibitory neurotransmission: signaling inhibits adenylate cyclase activity and activates a phosphatidylinositol-calcium second messenger system that regulates the release of Ca(2+) ions from intracellular stores. Beta-arrestin family members regulate signaling by mediating both receptor desensitization and resensitization processes. The sequence is that of 5-hydroxytryptamine receptor 1A (HTR1A) from Vulpes vulpes (Red fox).